The following is a 512-amino-acid chain: ATP synthase subunit alpha (512 aa).

169-176 is an ATP binding site; that stretch reads GDRQTGKT.

It belongs to the ATPase alpha/beta chains family. As to quaternary structure, F-type ATPases have 2 components, CF(1) - the catalytic core - and CF(0) - the membrane proton channel. CF(1) has five subunits: alpha(3), beta(3), gamma(1), delta(1), epsilon(1). CF(0) has three main subunits: a(1), b(2) and c(9-12). The alpha and beta chains form an alternating ring which encloses part of the gamma chain. CF(1) is attached to CF(0) by a central stalk formed by the gamma and epsilon chains, while a peripheral stalk is formed by the delta and b chains.

The protein localises to the cell inner membrane. It catalyses the reaction ATP + H2O + 4 H(+)(in) = ADP + phosphate + 5 H(+)(out). Its function is as follows. Produces ATP from ADP in the presence of a proton gradient across the membrane. The alpha chain is a regulatory subunit. The polypeptide is ATP synthase subunit alpha (Aromatoleum aromaticum (strain DSM 19018 / LMG 30748 / EbN1) (Azoarcus sp. (strain EbN1))).